We begin with the raw amino-acid sequence, 487 residues long: Protein FAM221B (487 aa).

2 stretches are compositionally biased toward polar residues: residues 1-13 (MEANKTTEGPQDT) and 36-48 (HETPLQPSSSQKH). Disordered regions lie at residues 1–103 (MEAN…QSVT) and 132–289 (QLSP…VTSR). Over residues 81 to 103 (PPVKSSSSGLLSLPPQLSPQSVT) the composition is skewed to low complexity. 2 stretches are compositionally biased toward basic and acidic residues: residues 227–236 (ESEHFPKHSF) and 243–253 (AKEDESTKEGE). The residue at position 248 (S248) is a Phosphoserine.

The protein belongs to the FAM221 family.

This chain is Protein FAM221B (Fam221b), found in Mus musculus (Mouse).